The chain runs to 893 residues: Translation initiation factor IF-2 (893 aa).

Disordered stretches follow at residues 51–203 (KEHG…AEAE) and 216–299 (EENE…TSMQ). 3 stretches are compositionally biased toward basic and acidic residues: residues 102–203 (ALEE…AEAE), 216–238 (EENE…DADY), and 245–261 (HARE…EQQP). The region spanning 392 to 561 (GRAPVVTIMG…LLQSEVLELT (170 aa)) is the tr-type G domain. The interval 401 to 408 (GHVDHGKT) is G1. Position 401-408 (401-408 (GHVDHGKT)) interacts with GTP. Residues 426 to 430 (GITQH) are G2. Residues 447-450 (DTPG) are G3. Residues 447–451 (DTPGH) and 501–504 (NKID) each bind GTP. The segment at 501 to 504 (NKID) is G4. A G5 region spans residues 537 to 539 (SAK).

This sequence belongs to the TRAFAC class translation factor GTPase superfamily. Classic translation factor GTPase family. IF-2 subfamily.

The protein resides in the cytoplasm. Its function is as follows. One of the essential components for the initiation of protein synthesis. Protects formylmethionyl-tRNA from spontaneous hydrolysis and promotes its binding to the 30S ribosomal subunits. Also involved in the hydrolysis of GTP during the formation of the 70S ribosomal complex. This is Translation initiation factor IF-2 from Aliivibrio fischeri (strain ATCC 700601 / ES114) (Vibrio fischeri).